We begin with the raw amino-acid sequence, 462 residues long: Chromosomal replication initiator protein DnaA (462 aa).

The interval methionine 1 to alanine 84 is domain I, interacts with DnaA modulators. A domain II region spans residues alanine 84–serine 125. Positions asparagine 126 to alanine 342 are domain III, AAA+ region. The ATP site is built by glycine 170, glycine 172, lysine 173, and threonine 174. Positions asparagine 343 to serine 462 are domain IV, binds dsDNA.

The protein belongs to the DnaA family. In terms of assembly, oligomerizes as a right-handed, spiral filament on DNA at oriC.

It is found in the cytoplasm. Plays an essential role in the initiation and regulation of chromosomal replication. ATP-DnaA binds to the origin of replication (oriC) to initiate formation of the DNA replication initiation complex once per cell cycle. Binds the DnaA box (a 9 base pair repeat at the origin) and separates the double-stranded (ds)DNA. Forms a right-handed helical filament on oriC DNA; dsDNA binds to the exterior of the filament while single-stranded (ss)DNA is stabiized in the filament's interior. The ATP-DnaA-oriC complex binds and stabilizes one strand of the AT-rich DNA unwinding element (DUE), permitting loading of DNA polymerase. After initiation quickly degrades to an ADP-DnaA complex that is not apt for DNA replication. Binds acidic phospholipids. This chain is Chromosomal replication initiator protein DnaA, found in Shewanella sediminis (strain HAW-EB3).